The sequence spans 108 residues: AVAKLLAAADVTAALEGCKADDSFNHKVFFQKTGLAKKSNEELEAIFKILDQDKSGFIEDEELELFLQNFSAGARTLTKTETETFLKAGDSDGDGKIGVDEFQKLVKA.

Position 1 is an N-acetylalanine (Ala-1). EF-hand domains lie at 38-73 and 77-108; these read KSNE…FSAG and LTKT…LVKA. Ca(2+)-binding residues include Asp-51, Asp-53, Ser-55, Phe-57, Glu-59, Glu-62, Asp-90, Asp-92, Asp-94, Lys-96, and Glu-101.

The protein belongs to the parvalbumin family.

In terms of biological role, in muscle, parvalbumin is thought to be involved in relaxation after contraction. It binds two calcium ions. This Latimeria chalumnae (Coelacanth) protein is Parvalbumin beta.